Here is a 649-residue protein sequence, read N- to C-terminus: Lipolysis-stimulated lipoprotein receptor (649 aa).

Over residues 1–16 (MQQDGLGVGTRNGSGK) the composition is skewed to gly residues. Residues 1–21 (MQQDGLGVGTRNGSGKGRSVH) form a disordered region. Over 1–259 (MQQDGLGVGT…PGFQAGPIED (259 aa)) the chain is Extracellular. One can recognise an Ig-like V-type domain in the interval 86 to 234 (PARAIQVTVS…DLQGNNEAYA (149 aa)). Cys111 and Cys218 are oxidised to a cystine. Residues 260–280 (WLFVVVVCLAAFLIFLLLGIC) traverse the membrane as a helical segment. Topologically, residues 281–649 (WCQCCPHTCC…LALSRESLVV (369 aa)) are cytoplasmic. Thr336 carries the post-translational modification Phosphothreonine. Residues Ser365, Ser371, Ser389, Ser432, and Ser436 each carry the phosphoserine modification. Positions 414–649 (NFDPSRPGPP…LALSRESLVV (236 aa)) are disordered. Basic and acidic residues predominate over residues 426–444 (RVERAMSEVTSLHEDDWRS). Thr453 bears the Phosphothreonine mark. A phosphoserine mark is found at Ser464, Ser467, and Ser493. Phosphothreonine is present on Thr501. The segment covering 502 to 518 (PPSTAESGSRSPTSNGG) has biased composition (polar residues). Phosphoserine occurs at positions 528 and 530. The span at 529–565 (RSRDDLYDQDDSRDFPRSRDPHYDDFRSRERPPADPR) shows a compositional bias: basic and acidic residues. The residue at position 535 (Tyr535) is a Phosphotyrosine. Residues Ser540 and Ser579 each carry the phosphoserine modification. A compositionally biased stretch (basic and acidic residues) spans 589–609 (RLLEEAVRKKGSEERRRPHKE). Residue Ser631 is modified to Phosphoserine. Lys638 is covalently cross-linked (Glycyl lysine isopeptide (Lys-Gly) (interchain with G-Cter in ubiquitin)). Phosphoserine occurs at positions 643 and 646.

It belongs to the immunoglobulin superfamily. LISCH7 family. Homotrimer or homotetramer. Assembles into cell-cell contacts. Interacts (via the cytoplasmic domain) with MARVELD2 (via C-terminal cytoplasmic domain); the interaction is required to recruit MARVELD2 to tricellular contacts. Interacts with OCLN. Phosphorylation at Ser-365 by MAPK8/JNK1 and MAPK9/JNK2 may be required for exclusive localization at tricellular tight junstions. In terms of processing, polyubiquitinated at Lys-638 via 'Lys-63'-linked ubiquitin chains; deubiquitinated by USP53.

It localises to the cell membrane. It is found in the cell junction. The protein localises to the tight junction. In terms of biological role, probable role in the clearance of triglyceride-rich lipoprotein from blood. Binds chylomicrons, LDL and VLDL in presence of free fatty acids and allows their subsequent uptake in the cells. Maintains epithelial barrier function by recruiting MARVELD2/tricellulin to tricellular tight junctions. The chain is Lipolysis-stimulated lipoprotein receptor from Homo sapiens (Human).